A 330-amino-acid chain; its full sequence is 2-keto-3-deoxygluconate permease (330 aa).

10 consecutive transmembrane segments (helical) span residues 10–30 (VPGG…TFAP), 42–62 (ALIT…GATI), 77–97 (LLLG…QFIP), 100–120 (GIQS…VMNE), 140–160 (GAFA…TFGV), 163–183 (LAAF…LGCI), 200–220 (PAII…GMLI), 224–244 (LLGI…LFLL), 254–274 (VAGV…YALA), and 289–309 (AIIA…TVWV).

It belongs to the KdgT transporter family.

Its subcellular location is the cell membrane. The catalysed reaction is 2-dehydro-3-deoxy-D-gluconate(in) + H(+)(in) = 2-dehydro-3-deoxy-D-gluconate(out) + H(+)(out). Functionally, catalyzes the proton-dependent uptake of 2-keto-3-deoxygluconate (KDG) into the cell. In Bacillus subtilis (strain 168), this protein is 2-keto-3-deoxygluconate permease.